The following is a 995-amino-acid chain: ATP-dependent RNA helicase DBP10 (995 aa).

Positions 1-120 (MAGVQKRKRD…TQTGDDEDDV (120 aa)) are disordered. Acidic residues-rich tracts occupy residues 12–25 (EDQDDNGSEEDDIA) and 37–50 (SESDANDSDSEVEA). Over residues 71–81 (VNNKKKAENKD) the composition is skewed to basic and acidic residues. Ser101 bears the Phosphoserine mark. A Q motif motif is present at residues 137–165 (GSFPSFGLSKIVLNNIKRKGFRQPTPIQR). Residues 168–340 (IPLILQSRDI…KAGLVNPVLV (173 aa)) enclose the Helicase ATP-binding domain. 181 to 188 (ARTGSGKT) is an ATP binding site. The short motif at 288-291 (DEAD) is the DEAD box element. Disordered stretches follow at residues 389–427 (LQNSNNEADSDSDDENDRQKKRRNFKKEKFRKQKMPAAN) and 889–973 (GSRE…EQIR). 2 positions are modified to phosphoserine: Ser398 and Ser400. 2 stretches are compositionally biased toward basic residues: residues 407–422 (QKKRRNFKKEKFRKQK) and 914–924 (VRGKFKHKQMK). The Helicase C-terminal domain occupies 418 to 568 (FRKQKMPAAN…PMYDSLVDVM (151 aa)). Over residues 964–973 (SELKSTEQIR) the composition is skewed to basic and acidic residues.

This sequence belongs to the DEAD box helicase family. DDX54/DBP10 subfamily. In terms of assembly, interacts with RRP1 and associates with pre-ribosomal particles.

It localises to the nucleus. Its subcellular location is the nucleolus. It carries out the reaction ATP + H2O = ADP + phosphate + H(+). Functionally, ATP-binding RNA helicase involved in the biogenesis of 60S ribosomal subunits and is required for the normal formation of 25S and 5.8S rRNAs. The protein is ATP-dependent RNA helicase DBP10 (DBP10) of Saccharomyces cerevisiae (strain ATCC 204508 / S288c) (Baker's yeast).